The chain runs to 108 residues: Replication restart protein PriB (108 aa).

In terms of domain architecture, SSB spans 8 to 108; the sequence is IDNSFSVMGV…LHAEQIEFID (101 aa).

It belongs to the PriB family. As to quaternary structure, homodimer. Interacts with PriA and DnaT. Component of the replication restart primosome. Primosome assembly occurs via a 'hand-off' mechanism. PriA binds to replication forks, subsequently PriB then DnaT bind; DnaT then displaces ssDNA to generate the helicase loading substrate.

Functionally, involved in the restart of stalled replication forks, which reloads the replicative helicase on sites other than the origin of replication; the PriA-PriB pathway is the major replication restart pathway. During primosome assembly it facilitates complex formation between PriA and DnaT on DNA; stabilizes PriA on DNA. Stimulates the DNA unwinding activity of PriA helicase. The polypeptide is Replication restart protein PriB (Haemophilus influenzae (strain ATCC 51907 / DSM 11121 / KW20 / Rd)).